The primary structure comprises 252 residues: 2-succinyl-6-hydroxy-2,4-cyclohexadiene-1-carboxylate synthase (252 aa).

Belongs to the AB hydrolase superfamily. MenH family. As to quaternary structure, monomer.

It carries out the reaction 5-enolpyruvoyl-6-hydroxy-2-succinyl-cyclohex-3-ene-1-carboxylate = (1R,6R)-6-hydroxy-2-succinyl-cyclohexa-2,4-diene-1-carboxylate + pyruvate. The protein operates within quinol/quinone metabolism; 1,4-dihydroxy-2-naphthoate biosynthesis; 1,4-dihydroxy-2-naphthoate from chorismate: step 3/7. It functions in the pathway quinol/quinone metabolism; menaquinone biosynthesis. In terms of biological role, catalyzes a proton abstraction reaction that results in 2,5-elimination of pyruvate from 2-succinyl-5-enolpyruvyl-6-hydroxy-3-cyclohexene-1-carboxylate (SEPHCHC) and the formation of 2-succinyl-6-hydroxy-2,4-cyclohexadiene-1-carboxylate (SHCHC). The protein is 2-succinyl-6-hydroxy-2,4-cyclohexadiene-1-carboxylate synthase of Salmonella arizonae (strain ATCC BAA-731 / CDC346-86 / RSK2980).